The following is a 201-amino-acid chain: 3-isopropylmalate dehydratase small subunit (201 aa).

It belongs to the LeuD family. LeuD type 1 subfamily. As to quaternary structure, heterodimer of LeuC and LeuD.

It catalyses the reaction (2R,3S)-3-isopropylmalate = (2S)-2-isopropylmalate. The protein operates within amino-acid biosynthesis; L-leucine biosynthesis; L-leucine from 3-methyl-2-oxobutanoate: step 2/4. Catalyzes the isomerization between 2-isopropylmalate and 3-isopropylmalate, via the formation of 2-isopropylmaleate. This is 3-isopropylmalate dehydratase small subunit from Shewanella putrefaciens (strain CN-32 / ATCC BAA-453).